The primary structure comprises 521 residues: Bifunctional purine biosynthesis protein PurH (521 aa).

The MGS-like domain occupies 1 to 145 (MIKQALISVS…KNHRDVTVVV (145 aa)).

It belongs to the PurH family.

The catalysed reaction is (6R)-10-formyltetrahydrofolate + 5-amino-1-(5-phospho-beta-D-ribosyl)imidazole-4-carboxamide = 5-formamido-1-(5-phospho-D-ribosyl)imidazole-4-carboxamide + (6S)-5,6,7,8-tetrahydrofolate. The enzyme catalyses IMP + H2O = 5-formamido-1-(5-phospho-D-ribosyl)imidazole-4-carboxamide. It functions in the pathway purine metabolism; IMP biosynthesis via de novo pathway; 5-formamido-1-(5-phospho-D-ribosyl)imidazole-4-carboxamide from 5-amino-1-(5-phospho-D-ribosyl)imidazole-4-carboxamide (10-formyl THF route): step 1/1. Its pathway is purine metabolism; IMP biosynthesis via de novo pathway; IMP from 5-formamido-1-(5-phospho-D-ribosyl)imidazole-4-carboxamide: step 1/1. In Burkholderia pseudomallei (strain 1710b), this protein is Bifunctional purine biosynthesis protein PurH.